The sequence spans 293 residues: Glutamyl-Q tRNA(Asp) synthetase (293 aa).

L-glutamate is bound by residues 4–8 (RYAPS) and glutamate 40. Residues 7–17 (PSPSGDLHFGN) carry the 'HIGH' region motif. Zn(2+)-binding residues include cysteine 92, cysteine 94, tyrosine 113, and cysteine 117. Positions 180 and 198 each coordinate L-glutamate. The short motif at 236-240 (RLAKR) is the 'KMSKS' region element. ATP is bound at residue lysine 239.

The protein belongs to the class-I aminoacyl-tRNA synthetase family. GluQ subfamily. Zn(2+) serves as cofactor.

Functionally, catalyzes the tRNA-independent activation of glutamate in presence of ATP and the subsequent transfer of glutamate onto a tRNA(Asp). Glutamate is transferred on the 2-amino-5-(4,5-dihydroxy-2-cyclopenten-1-yl) moiety of the queuosine in the wobble position of the QUC anticodon. This Corynebacterium glutamicum (strain ATCC 13032 / DSM 20300 / JCM 1318 / BCRC 11384 / CCUG 27702 / LMG 3730 / NBRC 12168 / NCIMB 10025 / NRRL B-2784 / 534) protein is Glutamyl-Q tRNA(Asp) synthetase.